Reading from the N-terminus, the 389-residue chain is Carbamoyl phosphate synthase small chain (389 aa).

Residues 1-197 are CPSase; it reads MMSSPAKAAK…AAKDASIGDD (197 aa). Residues serine 51, glycine 249, and glycine 251 each contribute to the L-glutamine site. Residues 201–387 enclose the Glutamine amidotransferase type-1 domain; it reads HVVCMDFGMK…QEQLNEKCGV (187 aa). Cysteine 276 serves as the catalytic Nucleophile. Positions 277, 280, 318, 320, and 321 each coordinate L-glutamine. Active-site residues include histidine 360 and glutamate 362.

The protein belongs to the CarA family. Composed of two chains; the small (or glutamine) chain promotes the hydrolysis of glutamine to ammonia, which is used by the large (or ammonia) chain to synthesize carbamoyl phosphate. Tetramer of heterodimers (alpha,beta)4.

It catalyses the reaction hydrogencarbonate + L-glutamine + 2 ATP + H2O = carbamoyl phosphate + L-glutamate + 2 ADP + phosphate + 2 H(+). It carries out the reaction L-glutamine + H2O = L-glutamate + NH4(+). The protein operates within amino-acid biosynthesis; L-arginine biosynthesis; carbamoyl phosphate from bicarbonate: step 1/1. It participates in pyrimidine metabolism; UMP biosynthesis via de novo pathway; (S)-dihydroorotate from bicarbonate: step 1/3. In terms of biological role, small subunit of the glutamine-dependent carbamoyl phosphate synthetase (CPSase). CPSase catalyzes the formation of carbamoyl phosphate from the ammonia moiety of glutamine, carbonate, and phosphate donated by ATP, constituting the first step of 2 biosynthetic pathways, one leading to arginine and/or urea and the other to pyrimidine nucleotides. The small subunit (glutamine amidotransferase) binds and cleaves glutamine to supply the large subunit with the substrate ammonia. In Rhodopirellula baltica (strain DSM 10527 / NCIMB 13988 / SH1), this protein is Carbamoyl phosphate synthase small chain.